Consider the following 114-residue polypeptide: Nucleoid-associated protein Cyan7425_0899 (114 aa).

It belongs to the YbaB/EbfC family. As to quaternary structure, homodimer.

It localises to the cytoplasm. The protein localises to the nucleoid. In terms of biological role, binds to DNA and alters its conformation. May be involved in regulation of gene expression, nucleoid organization and DNA protection. This Cyanothece sp. (strain PCC 7425 / ATCC 29141) protein is Nucleoid-associated protein Cyan7425_0899.